Reading from the N-terminus, the 262-residue chain is Zinc finger protein ehn-3 (262 aa).

4 C2H2-type zinc fingers span residues 2–24, 30–52, 59–84, and 92–115; these read EKCD…KVMH, FECQ…MMTH, FECP…DSEH, and AKCK…HTAH. The interval 179-204 is disordered; it reads SVKSAKELSPTPSTEIETPEEEELDG. A compositionally biased stretch (low complexity) spans 185–194; sequence ELSPTPSTEI. Residues 195-204 are compositionally biased toward acidic residues; the sequence is ETPEEEELDG. 2 consecutive C2H2-type zinc fingers follow at residues 208–230 and 236–260; these read WYCD…SGLH and FKCS…YANH.

Belongs to the krueppel C2H2-type zinc-finger protein family.

It localises to the nucleus. Together with the zinc finger protein ztf-16, plays a role in gonadogenesis, specifically in somatic gonad precursor cell development. This is possibly by regulating tra-1 gene expression. In terms of biological role, required for proper gonadal primordium assembly and somatic gonad precursor cell morphology. This is Zinc finger protein ehn-3 from Caenorhabditis elegans.